A 1404-amino-acid chain; its full sequence is MKDLLKFLKQQSKTEEFDGIKIGLASPDLIRSWSFGEVKKPETINYRTFKPEREGLFCARIFGPVKDYECLCGKYKRLKHRGVICEKCGVEVTQTKVRRERMGHIDLASPVAHIWFLKSLPSRIGLMLDMTLRDIERVLYFESFVVIEPGMTSLERGQMLTEENYLDALEEYGDEFDAKMGAEAVLELLRAIDLEKEIEMMREELPSINSETRRKKVTKRLKLVEAFFTSGNKPEWMILKVLPVLPPDLRPLVPLDGGRFATSDLNDLYRRVINRNNRLKRLLDLAAPDIIVRNEKRMLQESVDALLDNGRRGRAITGSNKRPLKSLADMIKGKQGRFRQNLLGKRVDYSGRSVITVGPTLRLHQCGLPKKMALELFKPFIYGKLEGRGLATTIKAAKKMVEREVPEVWDVLDDVIREHPVMLNRAPTLHRLGIQAFEPVLIEGKAIQLHPLVCAAYNADFDGDQMAVHVPLTLEAQLEARSLMMSTNNILSPANGEPVITPSQDVVLGLYYTSRERINGKGEGMAFSDVAEAEKAYRTGVAELHARVKVRITETATNEAGEKVKTRRIVDTTVGRALLSQILPKGLSYDLVNQNMGKKQISKLLNTCYRQLGLKDTVIFADQLMYTGFHFATISGASVGIDDMVIPDEKYTLVADAEAEVLEIQEQFQSGLVTAGERYNKVIDIWASANEKVSKAMMANLSKETVINRDGEEEQQESFNSIYMMADSGARGSAAQIRQLAGMRGLMAKPDGSIIETPIVANFREGLNVSQYFISTHGARKGLADTALKTANSGYLTRRLVDVAQDLVVIEDDCGTFEGLTMKPLIEGGDVVEPLRERVLGRVVAQDVFKPGTAEVLVPRNTLLDEAWCDIIEDNSIDEMIVRSVISCDTDFGVCKFCYGRDLARGHIINQGEAIGVVAAQSIGEPGTQLTMRTFHIGGAASRASAENNVQVKNSGTLKLHNAKFVTNSNGKLVIVSRSSELAIIDELGREKERYKVPYGTVLEKLEDDGVAAGEIIAKWDPHTHPIITEVAGSIKFVDMIEGVTMTRQTDELTGLSSIVVLEVGQRPTAGKEMRPMIRLVAADGSDLMIPGTEVPAQYFLPGHAIVNLDDNAPINVGDALARIPQESSKTRDITGGLPRVADLFEARKPKEPAILAEVSGTISFGKETKGKRRLVITPADGGEHYEEMIPKWRNLNVFEGEKVERGEVIADGAEAAHDILRLRGIHNVANYIVNEVQDVYRLQGVKINDKHIEVIIRQMLRKCEIVDAGDSEFLPGEQAEVSRVKIANRELEAQGKQPATFERELLGITKASLATESFISAASFQETTRVLTEAAVGGKSDKLRGLKENVIVGRLIPAGTGYSYHQKRAEAAAKPAVTEATSISASEAEQNLADLLNLAGSND.

Zn(2+) contacts are provided by cysteine 70, cysteine 72, cysteine 85, and cysteine 88. Mg(2+) contacts are provided by aspartate 460, aspartate 462, and aspartate 464. Zn(2+) is bound by residues cysteine 814, cysteine 888, cysteine 895, and cysteine 898.

The protein belongs to the RNA polymerase beta' chain family. The RNAP catalytic core consists of 2 alpha, 1 beta, 1 beta' and 1 omega subunit. When a sigma factor is associated with the core the holoenzyme is formed, which can initiate transcription. Requires Mg(2+) as cofactor. Zn(2+) serves as cofactor.

The catalysed reaction is RNA(n) + a ribonucleoside 5'-triphosphate = RNA(n+1) + diphosphate. DNA-dependent RNA polymerase catalyzes the transcription of DNA into RNA using the four ribonucleoside triphosphates as substrates. The polypeptide is DNA-directed RNA polymerase subunit beta' (Shewanella halifaxensis (strain HAW-EB4)).